The following is a 240-amino-acid chain: tRNA (guanine-N(1)-)-methyltransferase (240 aa).

Residues Gly110 and 129-134 (LGDFVL) each bind S-adenosyl-L-methionine.

The protein belongs to the RNA methyltransferase TrmD family. Homodimer.

The protein localises to the cytoplasm. The enzyme catalyses guanosine(37) in tRNA + S-adenosyl-L-methionine = N(1)-methylguanosine(37) in tRNA + S-adenosyl-L-homocysteine + H(+). Functionally, specifically methylates guanosine-37 in various tRNAs. In Clostridium botulinum (strain Langeland / NCTC 10281 / Type F), this protein is tRNA (guanine-N(1)-)-methyltransferase.